Here is a 153-residue protein sequence, read N- to C-terminus: Small ribosomal subunit protein uS19 (153 aa).

The protein belongs to the universal ribosomal protein uS19 family.

This is Small ribosomal subunit protein uS19 (RPS15) from Elaeis oleifera (American oil palm).